Consider the following 245-residue polypeptide: MTRMSISVKNLKEIVDMLGTIVSEVKFKLEPNGISVTAVDPAHVAMISLDIPKNAFSEYDLDAPDEIAVDLDKVKSVIRLASSNDTIVISKDRDKLRFEIGTIIKSIALLDNNSVTTPRVPQINSDDYVILSKSDLEKGLRAAEDVSDAIRLTLTPESFSAKSTSDSDESEMLLPKDMLKDISCSQPIKSSYPLEYLLKLVKSISSNEDIKISFKSDYPLSIEFSFNSETEPISGKFLLAPRMES.

The protein belongs to the PCNA family. As to quaternary structure, homotrimer. The subunits circularize to form a toroid; DNA passes through its center. Replication factor C (RFC) is required to load the toroid on the DNA.

In terms of biological role, sliding clamp subunit that acts as a moving platform for DNA processing. Responsible for tethering the catalytic subunit of DNA polymerase and other proteins to DNA during high-speed replication. This Picrophilus torridus (strain ATCC 700027 / DSM 9790 / JCM 10055 / NBRC 100828 / KAW 2/3) protein is DNA polymerase sliding clamp.